A 203-amino-acid chain; its full sequence is Ribosomal RNA large subunit methyltransferase E (203 aa).

S-adenosyl-L-methionine contacts are provided by G51, W53, D69, D85, and D109. K149 functions as the Proton acceptor in the catalytic mechanism.

This sequence belongs to the class I-like SAM-binding methyltransferase superfamily. RNA methyltransferase RlmE family.

It localises to the cytoplasm. The catalysed reaction is uridine(2552) in 23S rRNA + S-adenosyl-L-methionine = 2'-O-methyluridine(2552) in 23S rRNA + S-adenosyl-L-homocysteine + H(+). Its function is as follows. Specifically methylates the uridine in position 2552 of 23S rRNA at the 2'-O position of the ribose in the fully assembled 50S ribosomal subunit. This chain is Ribosomal RNA large subunit methyltransferase E, found in Methanoculleus marisnigri (strain ATCC 35101 / DSM 1498 / JR1).